Consider the following 411-residue polypeptide: Phosphoglycerate kinase (411 aa).

Substrate is bound by residues 22 to 24, R37, 60 to 63, R123, and R165; these read DFN and HLSR. ATP contacts are provided by residues K216, E339, and 366 to 369; that span reads GGDS.

It belongs to the phosphoglycerate kinase family. As to quaternary structure, monomer.

It localises to the cytoplasm. It catalyses the reaction (2R)-3-phosphoglycerate + ATP = (2R)-3-phospho-glyceroyl phosphate + ADP. It participates in carbohydrate degradation; glycolysis; pyruvate from D-glyceraldehyde 3-phosphate: step 2/5. This is Phosphoglycerate kinase (pgk) from Mycoplasma genitalium (strain ATCC 33530 / DSM 19775 / NCTC 10195 / G37) (Mycoplasmoides genitalium).